Reading from the N-terminus, the 154-residue chain is Cytochrome c-type biogenesis protein CcmE (154 aa).

Residues methionine 1–arginine 7 lie on the Cytoplasmic side of the membrane. The helical; Signal-anchor for type II membrane protein transmembrane segment at leucine 8 to alanine 28 threads the bilayer. Residues phenylalanine 29 to proline 154 lie on the Periplasmic side of the membrane. Residues histidine 121 and tyrosine 125 each contribute to the heme site. Residues alanine 131–proline 154 are disordered.

This sequence belongs to the CcmE/CycJ family.

It localises to the cell inner membrane. Its function is as follows. Heme chaperone required for the biogenesis of c-type cytochromes. Transiently binds heme delivered by CcmC and transfers the heme to apo-cytochromes in a process facilitated by CcmF and CcmH. The chain is Cytochrome c-type biogenesis protein CcmE from Methylibium petroleiphilum (strain ATCC BAA-1232 / LMG 22953 / PM1).